Reading from the N-terminus, the 247-residue chain is Membrane-spanning 4-domains subfamily A member 6D (247 aa).

Topologically, residues 1-46 (MIPQVVTSETVTVISPNGISFPQTDKPQPSHQSQDSLKKHLKAEIK) are cytoplasmic. A helical membrane pass occupies residues 47-67 (VMAAIQIMCAVMVLSLGIILA). Residues 68 to 80 (SVPSNLHFTSVFS) lie on the Extracellular side of the membrane. A helical membrane pass occupies residues 81–101 (ILLESGYPFVGALFFAISGIL). Topologically, residues 102 to 121 (SIVTEKKMTKPLVHSSLALS) are cytoplasmic. A helical membrane pass occupies residues 122-142 (ILSVLSALTGIAILSVSLAAL). Residues 143 to 180 (EPALQQCKLAFTQLDTTQDAYHFFSPEPLNSCFVAKAA) lie on the Extracellular side of the membrane. A helical transmembrane segment spans residues 181 to 201 (LTGVFSLMLISSVLELGLAVL). The Cytoplasmic segment spans residues 202-247 (TATLWWKQSSSAFSGNVIFLSQNSKNKSSVSSESLCNPTYENILTS). The residue at position 235 (S235) is a Phosphoserine.

Belongs to the MS4A family. In terms of tissue distribution, expressed in thymus, spleen, intestine, colon, testis, heart, liver, brain, kidney, peripheral lymph node and bone marrow.

The protein localises to the membrane. May be involved in signal transduction as a component of a multimeric receptor complex. This Mus musculus (Mouse) protein is Membrane-spanning 4-domains subfamily A member 6D (Ms4a6d).